A 594-amino-acid chain; its full sequence is UvrABC system protein C (594 aa).

A GIY-YIG domain is found at 13–99 (SSSGVYQYFD…IKQLKPKYNI (87 aa)). Residues 205–240 (DRLIKELELKMERLSSNLRFEEALIYRDRIAKIQKI) form the UVR domain.

This sequence belongs to the UvrC family. As to quaternary structure, interacts with UvrB in an incision complex.

Its subcellular location is the cytoplasm. Functionally, the UvrABC repair system catalyzes the recognition and processing of DNA lesions. UvrC both incises the 5' and 3' sides of the lesion. The N-terminal half is responsible for the 3' incision and the C-terminal half is responsible for the 5' incision. This chain is UvrABC system protein C, found in Helicobacter pylori (strain J99 / ATCC 700824) (Campylobacter pylori J99).